Consider the following 204-residue polypeptide: RNA-free ribonuclease P (204 aa).

This sequence belongs to the HARP family.

It catalyses the reaction Endonucleolytic cleavage of RNA, removing 5'-extranucleotides from tRNA precursor.. RNA-free RNase P that catalyzes the removal of the 5'-leader sequence from pre-tRNA to produce the mature 5'-terminus. This Pyrococcus abyssi (strain GE5 / Orsay) protein is RNA-free ribonuclease P.